A 482-amino-acid polypeptide reads, in one-letter code: NAD(+) hydrolase ThsA (482 aa).

The Deacetylase sirtuin-type domain occupies 3-281; the sequence is EHEQKIMIDR…EEITKRFRCK (279 aa). Positions 112 and 150 each coordinate NAD(+). Residue H150 is the Proton acceptor of the active site. The tract at residues 282–482 is SLOG (STALD) domain; it reads NVFLSGSAHE…SKIHDVIKLI (201 aa). G287, S288, L324, F355, R373, K390, G407, and E411 together coordinate 3'cADPR.

It belongs to the soluble Thoeris ThsA family. As to quaternary structure, homotetramer in solution.

It carries out the reaction NAD(+) + H2O = ADP-D-ribose + nicotinamide + H(+). Its activity is regulated as follows. In vivo probably activated by a cyclic ADP-D-ribose generated by ThsB (might be 3'cADPR). Functionally, NAD(+) hydrolyzing component (NADase) of the Thoeris antiviral defense system, composed of ThsA and ThsB (maybe J591_1492). As purified, has NADase activity that is not activated by any tested cADPR isomers; binds 3'cADPR better than 2'cADPR. It was suggested the purified protein is already in a fully active state. Upon activation binds and hydrolyzes NAD(+), leading to cell death and inhibition of phage replication. In Acinetobacter baumannii (strain 532279), this protein is NAD(+) hydrolase ThsA.